The chain runs to 122 residues: Large ribosomal subunit protein uL14 (122 aa).

This sequence belongs to the universal ribosomal protein uL14 family. Part of the 50S ribosomal subunit. Forms a cluster with proteins L3 and L19. In the 70S ribosome, L14 and L19 interact and together make contacts with the 16S rRNA in bridges B5 and B8.

Functionally, binds to 23S rRNA. Forms part of two intersubunit bridges in the 70S ribosome. The polypeptide is Large ribosomal subunit protein uL14 (Salinibacter ruber (strain DSM 13855 / M31)).